The sequence spans 80 residues: uncharacterized protein (80 aa).

The signal sequence occupies residues 1–23 (MKWNNMLKAAGIAVLLFSVFAYA).

This is an uncharacterized protein from Bacillus subtilis (strain 168).